Consider the following 441-residue polypeptide: ACT domain-containing protein ACR8 (441 aa).

ACT domains are found at residues 34–110 (IVKV…NIEV), 115–196 (ALEL…SAAK), 248–324 (VVNV…ALEG), and 326–405 (RLEL…TMYH).

In terms of tissue distribution, expressed in roots, leaves, flowers and siliques.

Its function is as follows. May bind amino acids. The chain is ACT domain-containing protein ACR8 from Arabidopsis thaliana (Mouse-ear cress).